Reading from the N-terminus, the 248-residue chain is UPF0651 protein YPL107W, mitochondrial (248 aa).

The N-terminal 26 residues, 1 to 26 (MIRNQGWSLLYRIYPVRRFTRYSRVD), are a transit peptide targeting the mitochondrion. The region spanning 69–116 (KKIAGVQVPAKPQEPDNCCMSGCVNCVWEIYSEDLRDWKHRRKEAAEK) is the Oxidoreductase-like domain.

This sequence belongs to the UPF0651 family.

The protein localises to the mitochondrion. This is UPF0651 protein YPL107W, mitochondrial from Saccharomyces cerevisiae (strain ATCC 204508 / S288c) (Baker's yeast).